The sequence spans 244 residues: 7-cyano-7-deazaguanine synthase (244 aa).

Position 14 to 24 (14 to 24 (FSGGQDSATCV)) interacts with ATP. Zn(2+) contacts are provided by cysteine 202, cysteine 217, cysteine 220, and cysteine 223.

It belongs to the QueC family. It depends on Zn(2+) as a cofactor.

The enzyme catalyses 7-carboxy-7-deazaguanine + NH4(+) + ATP = 7-cyano-7-deazaguanine + ADP + phosphate + H2O + H(+). The protein operates within purine metabolism; 7-cyano-7-deazaguanine biosynthesis. Catalyzes the ATP-dependent conversion of 7-carboxy-7-deazaguanine (CDG) to 7-cyano-7-deazaguanine (preQ(0)). The protein is 7-cyano-7-deazaguanine synthase of Burkholderia cenocepacia (strain HI2424).